The chain runs to 227 residues: MANHSQLGFQDASSPIMEELVEFHDHALMVALAICSLVLYLLTLMLMEKLSSNTVDAQEVELIWTILPAIVLVLLALPSLQILYMMDEIDEPDLTLKAIGHQWYWTYEYTDFKDLSFDSYMTPTTDLPLGHFRLLEVDHRIVIPMESPIRVIITADDVLHSWAVPALGVKTDAIPGRLNQTSFITTRPGVFYGQCSEICGANHSYMPIVVESTPLKHFEAWSSLLSS.

The Mitochondrial intermembrane portion of the chain corresponds to 1–14; it reads MANHSQLGFQDASS. A helical transmembrane segment spans residues 15–45; the sequence is PIMEELVEFHDHALMVALAICSLVLYLLTLM. The Mitochondrial matrix segment spans residues 46–58; it reads LMEKLSSNTVDAQ. A helical membrane pass occupies residues 59–86; it reads EVELIWTILPAIVLVLLALPSLQILYMM. Residues 87 to 227 are Mitochondrial intermembrane-facing; it reads DEIDEPDLTL…FEAWSSLLSS (141 aa). The Cu cation site is built by His-160, Cys-195, Glu-197, Cys-199, His-203, and Met-206. Glu-197 contacts Mg(2+).

The protein belongs to the cytochrome c oxidase subunit 2 family. As to quaternary structure, component of the cytochrome c oxidase (complex IV, CIV), a multisubunit enzyme composed of 14 subunits. The complex is composed of a catalytic core of 3 subunits MT-CO1, MT-CO2 and MT-CO3, encoded in the mitochondrial DNA, and 11 supernumerary subunits COX4I, COX5A, COX5B, COX6A, COX6B, COX6C, COX7A, COX7B, COX7C, COX8 and NDUFA4, which are encoded in the nuclear genome. The complex exists as a monomer or a dimer and forms supercomplexes (SCs) in the inner mitochondrial membrane with NADH-ubiquinone oxidoreductase (complex I, CI) and ubiquinol-cytochrome c oxidoreductase (cytochrome b-c1 complex, complex III, CIII), resulting in different assemblies (supercomplex SCI(1)III(2)IV(1) and megacomplex MCI(2)III(2)IV(2)). Found in a complex with TMEM177, COA6, COX18, COX20, SCO1 and SCO2. Interacts with TMEM177 in a COX20-dependent manner. Interacts with COX20. Interacts with COX16. Cu cation is required as a cofactor.

The protein localises to the mitochondrion inner membrane. The enzyme catalyses 4 Fe(II)-[cytochrome c] + O2 + 8 H(+)(in) = 4 Fe(III)-[cytochrome c] + 2 H2O + 4 H(+)(out). In terms of biological role, component of the cytochrome c oxidase, the last enzyme in the mitochondrial electron transport chain which drives oxidative phosphorylation. The respiratory chain contains 3 multisubunit complexes succinate dehydrogenase (complex II, CII), ubiquinol-cytochrome c oxidoreductase (cytochrome b-c1 complex, complex III, CIII) and cytochrome c oxidase (complex IV, CIV), that cooperate to transfer electrons derived from NADH and succinate to molecular oxygen, creating an electrochemical gradient over the inner membrane that drives transmembrane transport and the ATP synthase. Cytochrome c oxidase is the component of the respiratory chain that catalyzes the reduction of oxygen to water. Electrons originating from reduced cytochrome c in the intermembrane space (IMS) are transferred via the dinuclear copper A center (CU(A)) of subunit 2 and heme A of subunit 1 to the active site in subunit 1, a binuclear center (BNC) formed by heme A3 and copper B (CU(B)). The BNC reduces molecular oxygen to 2 water molecules using 4 electrons from cytochrome c in the IMS and 4 protons from the mitochondrial matrix. This Gallus gallus (Chicken) protein is Cytochrome c oxidase subunit 2 (MT-CO2).